Reading from the N-terminus, the 84-residue chain is Small ribosomal subunit protein bS20 (84 aa).

The protein belongs to the bacterial ribosomal protein bS20 family.

Binds directly to 16S ribosomal RNA. The sequence is that of Small ribosomal subunit protein bS20 from Limosilactobacillus reuteri (strain DSM 20016) (Lactobacillus reuteri).